The chain runs to 140 residues: uncharacterized protein (140 aa).

This is an uncharacterized protein from Caenorhabditis elegans.